Reading from the N-terminus, the 179-residue chain is UPF0398 protein Bsph_0756 (179 aa).

It belongs to the UPF0398 family.

The chain is UPF0398 protein Bsph_0756 from Lysinibacillus sphaericus (strain C3-41).